The chain runs to 1515 residues: Metal resistance protein YCF1 (1515 aa).

Topologically, residues 1 to 32 (MAGNLVSWACKLCRSPEGFGPISFYGDFTQCF) are vacuolar. The chain crosses the membrane as a helical span at residues 33–53 (IDGVILNLSAIFMITFGIRDL). The Cytoplasmic portion of the chain corresponds to 54 to 73 (VNLCKKKHSGIKYRRNWIIV). The helical transmembrane segment at 74 to 94 (SRMALVLLEIAFVSLASLNIS) threads the bilayer. At 95–99 (KEEAE) the chain is on the vacuolar side. A helical transmembrane segment spans residues 100-120 (NFTIVSQYASTMLSLFVALAL). The Cytoplasmic portion of the chain corresponds to 121–130 (HWIEYDRSVV). A helical transmembrane segment spans residues 131–151 (ANTVLLFYWLFETFGNFAKLI). At 152–169 (NILIRHTYEGIWYSGQTG) the chain is on the vacuolar side. A helical transmembrane segment spans residues 170-190 (FILTLFQVITCASILLLEALP). The Cytoplasmic portion of the chain corresponds to 191–278 (KKPLMPHQHI…QKSNPSLSWA (88 aa)). A Phosphoserine modification is found at Ser251. A helical membrane pass occupies residues 279-299 (ICRTFGSKMLLAAFFKAIHDV). In terms of domain architecture, ABC transmembrane type-1 1 spans 287–590 (MLLAAFFKAI…IPMVLNSFIE (304 aa)). Topologically, residues 300-345 (LAFTQPQLLRILIKFVTDYNSERQDDHSSLQGFENNHPQKLPIVRG) are vacuolar. Residues 346 to 366 (FLIAFAMFLVGFTQTSVLHQY) form a helical membrane-spanning segment. At 367–422 (FLNVFNTGMYIKSALTALIYQKSLVLSNEASGLSSTGDIVNLMSVDVQKLQDLTQW) the chain is on the cytoplasmic side. A helical transmembrane segment spans residues 423–443 (LNLIWSGPFQIIICLYSLYKL). The Vacuolar segment spans residues 444-446 (LGN). Residues 447 to 467 (SMWVGVIILVIMMPLNSFLMR) form a helical membrane-spanning segment. Residues 468–530 (IQKKLQKSQM…NLTKLGCYMA (63 aa)) lie on the Cytoplasmic side of the membrane. A helical transmembrane segment spans residues 531–551 (VTSFQFNIVPFLVSCCTFAVF). Over 552–572 (VYTEDRALTTDLVFPALTLFN) the chain is Vacuolar. The chain crosses the membrane as a helical span at residues 573–593 (LLSFPLMIIPMVLNSFIEASV). Over 594–943 (SIGRLFTFFT…VKWNIYLEYA (350 aa)) the chain is Cytoplasmic. The ABC transporter 1 domain maps to 626–853 (INIGDDATFL…ADSPLWKLLN (228 aa)). 663–670 (GKVGSGKT) contacts ATP. Phosphoserine occurs at positions 873, 903, and 908. Thr911 carries the post-translational modification Phosphothreonine. Ser914 carries the post-translational modification Phosphoserine. The chain crosses the membrane as a helical span at residues 944–964 (KACNPKSVCVFILFIVISMFL). The ABC transmembrane type-1 2 domain occupies 951 to 1235 (VCVFILFIVI…IVRMTVEVET (285 aa)). Topologically, residues 965-1001 (SVMGNVWLKHWSEVNSRYGSNPNAARYLAIYFALGIG) are vacuolar. Residues 1002-1023 (SALATLIQTIVLWVFCTIHASK) form a helical membrane-spanning segment. Over 1024-1066 (YLHNLMTNSVLRAPMTFFETTPIGRILNRFSNDIYKVDALLGR) the chain is Cytoplasmic. The helical transmembrane segment at 1067 to 1087 (TFSQFFVNAVKVTFTITVICA) threads the bilayer. Position 1088 (Thr1088) is a topological domain, vacuolar. A helical transmembrane segment spans residues 1089 to 1109 (TWQFIFIIIPLSVFYIYYQQY). Topologically, residues 1110–1180 (YLRTSRELRR…NANRWLAYRL (71 aa)) are cytoplasmic. Residues 1181–1201 (ELIGSIIILGAATLSVFRLKQ) form a helical membrane-spanning segment. At 1202 to 1205 (GTLT) the chain is on the vacuolar side. Residues 1206 to 1226 (AGMVGLSLSYALQITQTLNWI) traverse the membrane as a helical segment. The Cytoplasmic segment spans residues 1227–1515 (VRMTVEVETN…CMEAGLVNEN (289 aa)). The ABC transporter 2 domain occupies 1272–1507 (IKFNNYSTRY…NKSLFYSLCM (236 aa)). ATP is bound at residue 1306 to 1313 (GRTGAGKS).

The protein belongs to the ABC transporter superfamily. ABCC family. Conjugate transporter (TC 3.A.1.208) subfamily.

It localises to the vacuole membrane. It carries out the reaction Cd(2+)(in) + ATP + H2O = Cd(2+)(out) + ADP + phosphate + H(+). It catalyses the reaction an S-substituted glutathione(in) + ATP + H2O = an S-substituted glutathione(out) + ADP + phosphate + H(+). Cooperates for the ATP-dependent vacuolar transport of bilirubin and glutathione conjugates. This Saccharomyces cerevisiae (strain ATCC 204508 / S288c) (Baker's yeast) protein is Metal resistance protein YCF1 (YCF1).